Consider the following 356-residue polypeptide: Ferredoxin--NADP reductase (356 aa).

FAD contacts are provided by Thr-25, Glu-44, Gln-52, Tyr-57, Val-97, Phe-132, Asp-298, and Ser-339.

The protein belongs to the ferredoxin--NADP reductase type 2 family. In terms of assembly, homodimer. The cofactor is FAD.

The enzyme catalyses 2 reduced [2Fe-2S]-[ferredoxin] + NADP(+) + H(+) = 2 oxidized [2Fe-2S]-[ferredoxin] + NADPH. This chain is Ferredoxin--NADP reductase, found in Chlorobaculum parvum (strain DSM 263 / NCIMB 8327) (Chlorobium vibrioforme subsp. thiosulfatophilum).